Consider the following 131-residue polypeptide: Ponticulin-like protein M (131 aa).

The signal sequence occupies residues 1-19; that stretch reads MKFLSTLILLLSVLALVRG. Residue Ser-106 is the site of GPI-like-anchor amidated serine attachment. Positions 107-131 are cleaved as a propeptide — removed in mature form; sequence NSASSPLTTAVLFVVAFAAAIALLL.

This sequence belongs to the ponticulin family. The GPI-like-anchor contains a phosphoceramide group, rather than a phosphatidyl group.

It is found in the cell membrane. Its function is as follows. Binds F-actin and nucleates actin assembly. The chain is Ponticulin-like protein M (ponM) from Dictyostelium discoideum (Social amoeba).